Here is a 323-residue protein sequence, read N- to C-terminus: Pantothenate kinase (323 aa).

101-108 (GSVAVGKS) provides a ligand contact to ATP.

The protein belongs to the prokaryotic pantothenate kinase family.

It localises to the cytoplasm. It catalyses the reaction (R)-pantothenate + ATP = (R)-4'-phosphopantothenate + ADP + H(+). It participates in cofactor biosynthesis; coenzyme A biosynthesis; CoA from (R)-pantothenate: step 1/5. The polypeptide is Pantothenate kinase (Xanthobacter autotrophicus (strain ATCC BAA-1158 / Py2)).